The sequence spans 80 residues: MRLQRQSIKDSEVRGKWYFNIIGKDSELVEKAEHLLRDMGWEDECDGCPLYEDGESAGFWIYHSDVEQFKADWKIVKKSV.

This is an uncharacterized protein from Escherichia coli (Bacteriophage T4).